A 23-amino-acid polypeptide reads, in one-letter code: VFQFLGRIIHHVGNFVHGFSHVF.

F23 is subject to Phenylalanine amide.

It is found in the secreted. Its function is as follows. Has antimicrobial activity. This Styela clava (Sea squirt) protein is Clavanin-B.